An 863-amino-acid chain; its full sequence is Cilia- and flagella-associated protein 58 (863 aa).

Coiled coils occupy residues 107 to 600 (TVKE…NERD) and 631 to 815 (QSQY…KQVF). Residues 836–863 (GPSLLDQLPGGSGTGSGGMATGGGVGMS) form a disordered region. The segment covering 845–863 (GGSGTGSGGMATGGGVGMS) has biased composition (gly residues).

Belongs to the CFAP58 family.

The protein resides in the cell projection. The protein localises to the cilium. Its subcellular location is the flagellum. In Chlamydomonas reinhardtii (Chlamydomonas smithii), this protein is Cilia- and flagella-associated protein 58.